The following is a 141-amino-acid chain: HTH-type transcriptional regulator LrpA (141 aa).

Residues 2–63 form the HTH asnC-type domain; sequence VDERDKIILD…KINPKKLGYS (62 aa). A DNA-binding region (H-T-H motif) is located at residues 21–40; it reads FTEIAKILGISETAVRKRVK.

In terms of assembly, homooctamer; tetramer of dimers.

Functionally, DNA-binding protein that negatively regulates its own transcription. Interferes with RNA polymerase (RNAP) recruitment by inhibiting the association of RNAP with the TBP-TFB promoter complex. This chain is HTH-type transcriptional regulator LrpA (lrpA), found in Pyrococcus abyssi (strain GE5 / Orsay).